The sequence spans 280 residues: Energy-coupling factor transporter ATP-binding protein EcfA1 (280 aa).

Residues 6–241 (IELKNVTFRY…GDELLDLGLD (236 aa)) enclose the ABC transporter domain. An ATP-binding site is contributed by 41 to 48 (GHNGSGKS).

The protein belongs to the ABC transporter superfamily. Energy-coupling factor EcfA family. Forms a stable energy-coupling factor (ECF) transporter complex composed of 2 membrane-embedded substrate-binding proteins (S component), 2 ATP-binding proteins (A component) and 2 transmembrane proteins (T component).

The protein localises to the cell membrane. ATP-binding (A) component of a common energy-coupling factor (ECF) ABC-transporter complex. Unlike classic ABC transporters this ECF transporter provides the energy necessary to transport a number of different substrates. This chain is Energy-coupling factor transporter ATP-binding protein EcfA1, found in Streptococcus mutans serotype c (strain ATCC 700610 / UA159).